The primary structure comprises 100 residues: Urease subunit gamma (100 aa).

The protein belongs to the urease gamma subunit family. In terms of assembly, heterotrimer of UreA (gamma), UreB (beta) and UreC (alpha) subunits. Three heterotrimers associate to form the active enzyme.

The protein resides in the cytoplasm. It catalyses the reaction urea + 2 H2O + H(+) = hydrogencarbonate + 2 NH4(+). It functions in the pathway nitrogen metabolism; urea degradation; CO(2) and NH(3) from urea (urease route): step 1/1. The polypeptide is Urease subunit gamma (Bradyrhizobium diazoefficiens (strain JCM 10833 / BCRC 13528 / IAM 13628 / NBRC 14792 / USDA 110)).